The sequence spans 463 residues: Probable ECA polymerase (463 aa).

Helical transmembrane passes span 6–26 (FGGL…LTWM), 39–59 (FSLL…VLVF), 65–85 (VVPV…YAIY), 112–132 (ANLT…IFFL), 154–174 (GVAL…VYFL), 180–200 (AWLM…VIVG), 201–221 (GTRA…IVRG), 222–242 (WITL…MFWL), 340–360 (LVVM…GLVI), 377–397 (YKAA…IVLT), and 408–428 (VVFF…LYWL).

The protein belongs to the WzyE family. In terms of assembly, probably part of a complex composed of WzxE, WzyE and WzzE.

The protein localises to the cell inner membrane. It participates in bacterial outer membrane biogenesis; enterobacterial common antigen biosynthesis. Its function is as follows. Probably involved in the polymerization of enterobacterial common antigen (ECA) trisaccharide repeat units. The sequence is that of Probable ECA polymerase from Pectobacterium carotovorum subsp. carotovorum (strain PC1).